The primary structure comprises 454 residues: Natural cytotoxicity triggering receptor 3 ligand 1 (454 aa).

The N-terminal stretch at 1-24 (MTWRAAASTCAALLILLWALTTEG) is a signal peptide. The Extracellular segment spans residues 25-262 (DLKVEMMAGG…SETEKTDNFS (238 aa)). The region spanning 27-138 (KVEMMAGGTQ…LKAQGTVQLE (112 aa)) is the Ig-like V-type domain. N-linked (GlcNAc...) asparagine glycans are attached at residues asparagine 43 and asparagine 57. Cysteine 48 and cysteine 122 are joined by a disulfide. Interaction with NCR3 stretches follow at residues 59 to 62 (TSMG) and 127 to 130 (TPLK). In terms of domain architecture, Ig-like C1-type spans 143–244 (PASRLLLDQV…LHTPLRSNFT (102 aa)). A disulfide bridge connects residues cysteine 163 and cysteine 228. Asparagine 174, asparagine 208, asparagine 216, asparagine 242, and asparagine 260 each carry an N-linked (GlcNAc...) asparagine glycan. A helical transmembrane segment spans residues 263–283 (IHWWPISFIGVGLVLLIVLIP). At 284-454 (WKKICNKSSS…QPPTLLLPLQ (171 aa)) the chain is on the cytoplasmic side. The tract at residues 291-429 (SSSAYTPLKC…APILPVSPIW (139 aa)) is retroviral-Gag-like. The tract at residues 395-454 (GKSIDDNSTKSEKQTPREHSDAVPDAPILPVSPIWEPPPATTSTTPVLSSQPPTLLLPLQ) is disordered. Over residues 397–416 (SIDDNSTKSEKQTPREHSDA) the composition is skewed to basic and acidic residues. Residues 435 to 454 (TTSTTPVLSSQPPTLLLPLQ) show a composition bias toward low complexity.

Monomer. Interacts specifically with NCR3, but not with other natural killer cell-activating receptors, including NCR1, NCR2 and KLRK1. Not detected in any normal tissue tested. Expressed at the surface of several tumor cell lines including T and B-lymphomas, myeloid leukemias, melanomas, carcinomas and large T SV40 antigen-transformed cells (at protein level).

Its subcellular location is the cell membrane. In terms of biological role, triggers NCR3-dependent natural killer cell activation. The chain is Natural cytotoxicity triggering receptor 3 ligand 1 (NCR3LG1) from Homo sapiens (Human).